The sequence spans 84 residues: Cytochrome b559 subunit alpha (84 aa).

Topologically, residues 2-20 (AGTTGERPFSDIITSVRYW) are cytoplasmic. A helical membrane pass occupies residues 21-35 (VIHSITIPALFIAGW). H23 is a binding site for heme. Topologically, residues 36 to 84 (LFVSTGLAYDVFGTPRPDSYYAQEQRSIPLVTDRFEAKQQVETFLEQLK) are lumenal.

It belongs to the PsbE/PsbF family. Heterodimer of an alpha subunit and a beta subunit. PSII is composed of 1 copy each of membrane proteins PsbA, PsbB, PsbC, PsbD, PsbE, PsbF, PsbH, PsbI, PsbJ, PsbK, PsbL, PsbM, PsbT, PsbX, PsbY, PsbZ, Psb30/Ycf12, peripheral proteins PsbO, CyanoQ (PsbQ), PsbU, PsbV and a large number of cofactors. It forms dimeric complexes. Heme b serves as cofactor.

It is found in the cellular thylakoid membrane. In terms of biological role, this b-type cytochrome is tightly associated with the reaction center of photosystem II (PSII). PSII is a light-driven water:plastoquinone oxidoreductase that uses light energy to abstract electrons from H(2)O, generating O(2) and a proton gradient subsequently used for ATP formation. It consists of a core antenna complex that captures photons, and an electron transfer chain that converts photonic excitation into a charge separation. This Thermostichus vulcanus (Synechococcus vulcanus) protein is Cytochrome b559 subunit alpha.